We begin with the raw amino-acid sequence, 151 residues long: Putative membrane protein ORF10 (151 aa).

Transmembrane regions (helical) follow at residues L7–V23 and G107–Y123.

The protein localises to the membrane. In Ictalurid herpesvirus 1 (strain Auburn) (IcHV-1), this protein is Putative membrane protein ORF10 (ORF10).